We begin with the raw amino-acid sequence, 377 residues long: uncharacterized protein (377 aa).

The disordered stretch occupies residues 1-25 (MAQQTNVAGQKTEKQRKAPFRADHV). The span at 11–24 (KTEKQRKAPFRADH) shows a compositional bias: basic and acidic residues.

This sequence to B.subtilis YxjG.

This is an uncharacterized protein from Bacillus subtilis (strain 168).